The chain runs to 251 residues: Regulator of G-protein signaling 9-binding protein B (251 aa).

Residues 1–230 (MPLQNVKVAD…NSKGCCSDGQ (230 aa)) lie on the Cytoplasmic side of the membrane. 2 coiled-coil regions span residues 52-94 (HLRD…ELER) and 158-187 (ANKA…MKVN). A helical; Anchor for type IV membrane protein transmembrane segment spans residues 231-250 (LIVFLLLCGTALVAITLYSI). Leucine 251 is a topological domain (extracellular).

This sequence belongs to the RGS7BP/RGS9BP family.

It is found in the membrane. Regulator of G protein-coupled receptor (GPCR) signaling. Probably acts by regulating the activity of some 'R7' family protein (RGS6, RGS7, RGS9 and/or RGS11). The chain is Regulator of G-protein signaling 9-binding protein B (rgs9bp-b) from Xenopus laevis (African clawed frog).